A 174-amino-acid chain; its full sequence is Scytalone dehydratase-like protein Arp1 (174 aa).

A substrate-binding site is contributed by Tyr49. Catalysis depends on residues His84 and His109. Residue Asn130 coordinates substrate.

The protein belongs to the scytalone dehydratase family. As to quaternary structure, homotrimer. Each subunit contains an active site, located in the central part of the hydrophobic core of the monomer, which functions independently.

Its function is as follows. Scytalone dehydratase-like protein; part of the Pks2 gene cluster that mediates the formation of infectious structures (appressoria), enabling these fungi to kill insects faster. The product of the Pks2 gene cluster is different from the one of Pks1 and has still not been identified. The polypeptide is Scytalone dehydratase-like protein Arp1 (Metarhizium majus (strain ARSEF 297)).